A 59-amino-acid polypeptide reads, in one-letter code: UPF0434 protein Mmc1_0910 (59 aa).

Belongs to the UPF0434 family.

The sequence is that of UPF0434 protein Mmc1_0910 from Magnetococcus marinus (strain ATCC BAA-1437 / JCM 17883 / MC-1).